We begin with the raw amino-acid sequence, 504 residues long: Probable cytochrome P450 513E1 (504 aa).

The chain crosses the membrane as a helical span at residues 1-21; sequence MNLYISILILIISLIIFFKNN. Cys450 is a heme binding site.

This sequence belongs to the cytochrome P450 family. Requires heme as cofactor.

The protein localises to the membrane. This Dictyostelium discoideum (Social amoeba) protein is Probable cytochrome P450 513E1 (cyp513E1).